A 441-amino-acid chain; its full sequence is Protein FAM83A (441 aa).

Disordered regions lie at residues Ser81 to Asp108 and Gly312 to Gln368. Over residues Ser314–Thr327 the composition is skewed to polar residues. The span at Ser328–Pro354 shows a compositional bias: low complexity.

This sequence belongs to the FAM83 family.

The protein localises to the cytoplasm. Its function is as follows. May function in the epidermal growth factor receptor/EGFR signaling pathway. The sequence is that of Protein FAM83A from Xenopus tropicalis (Western clawed frog).